The chain runs to 394 residues: Phosphoglycerate kinase (394 aa).

Residues 21–23 (DFN), arginine 36, 59–62 (HLGR), arginine 118, and arginine 151 contribute to the substrate site. A Phosphoserine modification is found at serine 183. ATP is bound by residues lysine 201 and glycine 292. Threonine 299 is subject to Phosphothreonine. Residues glutamate 323 and 350–353 (GGDS) contribute to the ATP site.

This sequence belongs to the phosphoglycerate kinase family. Monomer.

Its subcellular location is the cytoplasm. It carries out the reaction (2R)-3-phosphoglycerate + ATP = (2R)-3-phospho-glyceroyl phosphate + ADP. Its pathway is carbohydrate degradation; glycolysis; pyruvate from D-glyceraldehyde 3-phosphate: step 2/5. The protein is Phosphoglycerate kinase of Bacillus thuringiensis (strain Al Hakam).